The chain runs to 169 residues: Cell division inhibitor SulA (169 aa).

The tract at residues 106-112 is ftsZ binding; sequence ALRTGNY. Residues 162-169 form a lon protease binding region; it reads KIHSNLYH.

The protein belongs to the SulA family. In terms of assembly, interacts with FtsZ. Post-translationally, is rapidly cleaved and degraded by the Lon protease once DNA damage is repaired.

Its function is as follows. Component of the SOS system and an inhibitor of cell division. Accumulation of SulA causes rapid cessation of cell division and the appearance of long, non-septate filaments. In the presence of GTP, binds a polymerization-competent form of FtsZ in a 1:1 ratio, thus inhibiting FtsZ polymerization and therefore preventing it from participating in the assembly of the Z ring. This mechanism prevents the premature segregation of damaged DNA to daughter cells during cell division. This Salmonella choleraesuis (strain SC-B67) protein is Cell division inhibitor SulA.